The sequence spans 400 residues: Subtilisin-like protease 11 (400 aa).

The first 19 residues, 1–19, serve as a signal peptide directing secretion; it reads MGLFTVVFTAIAALSAVDA. A propeptide spanning residues 20–117 is cleaved from the precursor; the sequence is AELLRSPNSK…VEHDRYVYID (98 aa). In terms of domain architecture, Inhibitor I9 spans 35–116; sequence SYLVVMKDSV…FVEHDRYVYI (82 aa). The Peptidase S8 domain maps to 127–400; it reads SWGLGRVSHR…NKLLYNGSGQ (274 aa). Asparagine 138 carries N-linked (GlcNAc...) asparagine glycosylation. Active-site charge relay system residues include aspartate 159 and histidine 191. Asparagine 252, asparagine 336, and asparagine 337 each carry an N-linked (GlcNAc...) asparagine glycan. The Charge relay system role is filled by serine 346. Asparagine 388 and asparagine 396 each carry an N-linked (GlcNAc...) asparagine glycan.

This sequence belongs to the peptidase S8 family.

It localises to the secreted. Its function is as follows. Secreted subtilisin-like serine protease with keratinolytic activity that contributes to pathogenicity. The chain is Subtilisin-like protease 11 (SUB11) from Arthroderma gypseum (strain ATCC MYA-4604 / CBS 118893) (Microsporum gypseum).